A 396-amino-acid polypeptide reads, in one-letter code: Elongation factor Tu (396 aa).

The region spanning 10-206 is the tr-type G domain; the sequence is KPHVNIGTIG…AVDESVPEPV (197 aa). A G1 region spans residues 19–26; sequence GHVDHGKT. 19–26 contributes to the GTP binding site; it reads GHVDHGKT. Residue threonine 26 participates in Mg(2+) binding. A G2 region spans residues 62-66; that stretch reads GITIN. The G3 stretch occupies residues 83–86; it reads DAPG. GTP is bound by residues 83 to 87 and 138 to 141; these read DAPGH and NKSD. The interval 138–141 is G4; the sequence is NKSD. The tract at residues 176–178 is G5; that stretch reads SGL.

This sequence belongs to the TRAFAC class translation factor GTPase superfamily. Classic translation factor GTPase family. EF-Tu/EF-1A subfamily. Monomer.

The protein localises to the cytoplasm. It catalyses the reaction GTP + H2O = GDP + phosphate + H(+). In terms of biological role, GTP hydrolase that promotes the GTP-dependent binding of aminoacyl-tRNA to the A-site of ribosomes during protein biosynthesis. The chain is Elongation factor Tu from Beutenbergia cavernae (strain ATCC BAA-8 / DSM 12333 / CCUG 43141 / JCM 11478 / NBRC 16432 / NCIMB 13614 / HKI 0122).